The following is a 294-amino-acid chain: Cytidine deaminase (294 aa).

CMP/dCMP-type deaminase domains are found at residues 48 to 168 and 186 to 294; these read DEDA…FGPK and LTGD…VLLG. 89–91 lines the substrate pocket; the sequence is NME. Histidine 102 lines the Zn(2+) pocket. The Proton donor role is filled by glutamate 104. Zn(2+)-binding residues include cysteine 129 and cysteine 132.

Belongs to the cytidine and deoxycytidylate deaminase family. As to quaternary structure, homodimer. Requires Zn(2+) as cofactor.

It catalyses the reaction cytidine + H2O + H(+) = uridine + NH4(+). The enzyme catalyses 2'-deoxycytidine + H2O + H(+) = 2'-deoxyuridine + NH4(+). In terms of biological role, this enzyme scavenges exogenous and endogenous cytidine and 2'-deoxycytidine for UMP synthesis. The polypeptide is Cytidine deaminase (Salmonella newport (strain SL254)).